We begin with the raw amino-acid sequence, 293 residues long: 4-hydroxy-tetrahydrodipicolinate synthase (293 aa).

Pyruvate is bound at residue Thr45. The Proton donor/acceptor role is filled by Tyr133. The active-site Schiff-base intermediate with substrate is the Lys161. Ile203 is a pyruvate binding site.

Belongs to the DapA family. Homotetramer; dimer of dimers.

The protein resides in the cytoplasm. The catalysed reaction is L-aspartate 4-semialdehyde + pyruvate = (2S,4S)-4-hydroxy-2,3,4,5-tetrahydrodipicolinate + H2O + H(+). It participates in amino-acid biosynthesis; L-lysine biosynthesis via DAP pathway; (S)-tetrahydrodipicolinate from L-aspartate: step 3/4. Catalyzes the condensation of (S)-aspartate-beta-semialdehyde [(S)-ASA] and pyruvate to 4-hydroxy-tetrahydrodipicolinate (HTPA). The protein is 4-hydroxy-tetrahydrodipicolinate synthase of Shewanella piezotolerans (strain WP3 / JCM 13877).